The primary structure comprises 2185 residues: Genome polyprotein (2185 aa).

A lipid anchor (N-myristoyl glycine; by host) is attached at glycine 2. At 2 to 1495 the chain is on the cytoplasmic side; sequence GAQVSTQKTG…HVSRAFICLQ (1494 aa). Residues 568–584 form an amphipathic alpha-helix region; that stretch reads FFQGPVEDAITAAIGRV. Active-site for protease 2A activity residues include histidine 872 and aspartate 890. Residues cysteine 907 and cysteine 909 each coordinate Zn(2+). The active-site For protease 2A activity is the cysteine 961. Positions 967 and 969 each coordinate Zn(2+). The membrane-binding stretch occupies residues 1101–1173; it reads NNGWLKKFTE…EQSAPSQSDQ (73 aa). The tract at residues 1101–1239 is oligomerization; the sequence is NNGWLKKFTE…SPGAGKSVAT (139 aa). Residues 1122-1126 are RNA-binding; that stretch reads AIKIQ. Positions 1205–1361 constitute an SF3 helicase domain; it reads EKKMSNYIQF…SMYSQNGKIN (157 aa). Zn(2+) contacts are provided by cysteine 1369, cysteine 1381, and cysteine 1386. The C4-type; degenerate zinc finger occupies 1369–1386; it reads CDEECCPVNFKKCCPLVC. The segment at 1413–1420 is RNA-binding; sequence EYNHRHSV. The interval 1424-1429 is oligomerization; sequence LEALFQ. The stretch at 1496-1511 is an intramembrane region; the sequence is AITTFVSVAGIIYIIY. The Cytoplasmic portion of the chain corresponds to 1512-2185; the sequence is KLFAGFQGAY…TIRRKWLDSF (674 aa). Position 1521 is an O-(5'-phospho-RNA)-tyrosine (tyrosine 1521). The 179-residue stretch at 1541 to 1719 folds into the Peptidase C3 domain; the sequence is GPAFEFAVAM…FSAALLKHYF (179 aa). Active-site for protease 3C activity residues include histidine 1580, glutamate 1611, and cysteine 1687. The 117-residue stretch at 1950–2066 folds into the RdRp catalytic domain; that stretch reads GHLIAFDYSG…SYPWPIDASL (117 aa). Residues aspartate 1956 and aspartate 2052 each coordinate Mg(2+).

This sequence belongs to the picornaviruses polyprotein family. Interacts with capsid protein VP1 and capsid protein VP3 to form heterotrimeric protomers. As to quaternary structure, interacts with capsid protein VP0, and capsid protein VP3 to form heterotrimeric protomers. Five protomers subsequently associate to form pentamers which serve as building blocks for the capsid. Interacts with capsid protein VP2, capsid protein VP3 and capsid protein VP4 following cleavage of capsid protein VP0. Interacts with host CD55. Interacts with host CXADR. In terms of assembly, interacts with capsid protein VP1 and capsid protein VP3 in the mature capsid. Interacts with capsid protein VP0 and capsid protein VP1 to form heterotrimeric protomers. Five protomers subsequently associate to form pentamers which serve as building blocks for the capsid. Interacts with capsid protein VP4 in the mature capsid. Interacts with protein 2C; this interaction may be important for virion morphogenesis. As to quaternary structure, interacts with capsid protein VP1 and capsid protein VP3. In terms of assembly, homodimer. Homohexamer; forms a hexameric ring structure with 6-fold symmetry characteristic of AAA+ ATPases. Interacts (via N-terminus) with host RTN3 (via reticulon domain); this interaction is important for viral replication. Interacts with capsid protein VP3; this interaction may be important for virion morphogenesis. As to quaternary structure, interacts with protein 3CD. In terms of assembly, homodimer. Interacts with host GBF1. Interacts (via GOLD domain) with host ACBD3 (via GOLD domain); this interaction allows the formation of a viral protein 3A/ACBD3 heterotetramer with a 2:2 stoichiometry, which will stimulate the recruitment of host PI4KB in order to synthesize PI4P at the viral RNA replication sites. Interacts with RNA-directed RNA polymerase. As to quaternary structure, interacts with host TICAM1 (via C-terminus). In terms of assembly, interacts with protein 3AB and with RNA-directed RNA polymerase. Interacts with Viral protein genome-linked and with protein 3CD. The cofactor is Mg(2+). Post-translationally, specific enzymatic cleavages in vivo by the viral proteases yield processing intermediates and the mature proteins. Myristoylation is required for the formation of pentamers during virus assembly. Further assembly of 12 pentamers and a molecule of genomic RNA generates the provirion. In terms of processing, during virion maturation, immature virions are rendered infectious following cleavage of VP0 into VP4 and VP2. This maturation seems to be an autocatalytic event triggered by the presence of RNA in the capsid and it is followed by a conformational change infectious virion. Post-translationally, myristoylation is required during RNA encapsidation and formation of the mature virus particle. VPg is uridylylated by the polymerase into VPg-pUpU. This acts as a nucleotide-peptide primer for the genomic RNA replication.

The protein localises to the virion. It localises to the host cytoplasm. Its subcellular location is the host cytoplasmic vesicle membrane. It is found in the host nucleus. It carries out the reaction a ribonucleoside 5'-triphosphate + H2O = a ribonucleoside 5'-diphosphate + phosphate + H(+). The enzyme catalyses Selective cleavage of Tyr-|-Gly bond in the picornavirus polyprotein.. It catalyses the reaction RNA(n) + a ribonucleoside 5'-triphosphate = RNA(n+1) + diphosphate. The catalysed reaction is Selective cleavage of Gln-|-Gly bond in the poliovirus polyprotein. In other picornavirus reactions Glu may be substituted for Gln, and Ser or Thr for Gly.. Its activity is regulated as follows. Replication or transcription is subject to high level of random mutations by the nucleotide analog ribavirin. In terms of biological role, forms an icosahedral capsid of pseudo T=3 symmetry with capsid proteins VP2 and VP3. The capsid is 300 Angstroms in diameter, composed of 60 copies of each capsid protein and enclosing the viral positive strand RNA genome. Capsid protein VP1 mainly forms the vertices of the capsid. Capsid protein VP1 interacts with host cell receptors CD55 and CXADR to provide virion attachment to target host cells. This attachment induces virion internalization. Tyrosine kinases are probably involved in the entry process. After binding to its receptor, the capsid undergoes conformational changes. Capsid protein VP1 N-terminus (that contains an amphipathic alpha-helix) and capsid protein VP4 are externalized. Together, they shape a pore in the host membrane through which viral genome is translocated to host cell cytoplasm. Forms an icosahedral capsid of pseudo T=3 symmetry with capsid proteins VP2 and VP3. The capsid is 300 Angstroms in diameter, composed of 60 copies of each capsid protein and enclosing the viral positive strand RNA genome. Its function is as follows. Lies on the inner surface of the capsid shell. After binding to the host receptor, the capsid undergoes conformational changes. Capsid protein VP4 is released, Capsid protein VP1 N-terminus is externalized, and together, they shape a pore in the host membrane through which the viral genome is translocated into the host cell cytoplasm. Functionally, component of immature procapsids, which is cleaved into capsid proteins VP4 and VP2 after maturation. Allows the capsid to remain inactive before the maturation step. In terms of biological role, cysteine protease that cleaves viral polyprotein and specific host proteins. It is responsible for the autocatalytic cleavage between the P1 and P2 regions, which is the first cleavage occurring in the polyprotein. Also cleaves the host translation initiation factor EIF4G1, in order to shut down the capped cellular mRNA translation. Inhibits the host nucleus-cytoplasm protein and RNA trafficking by cleaving host members of the nuclear pores. Counteracts stress granule formation probably by antagonizing its assembly or promoting its dissassembly. Cleaves and inhibits host IFIH1/MDA5, thereby inhibiting the type-I IFN production and the establishment of the antiviral state. Cleaves and inhibits host MAVS, thereby inhibiting the type-I IFN production and the establishment of the antiviral state. Plays an essential role in the virus replication cycle by acting as a viroporin. Creates a pore in the host endoplasmic reticulum and as a consequence releases Ca2+ in the cytoplasm of infected cell. In turn, high levels of cytoplasmic calcium may trigger membrane trafficking and transport of viral ER-associated proteins to viroplasms, sites of viral genome replication. Its function is as follows. Induces and associates with structural rearrangements of intracellular membranes. Displays RNA-binding, nucleotide binding and NTPase activities. May play a role in virion morphogenesis and viral RNA encapsidation by interacting with the capsid protein VP3. Functionally, localizes the viral replication complex to the surface of membranous vesicles. Together with protein 3CD binds the Cis-Active RNA Element (CRE) which is involved in RNA synthesis initiation. Acts as a cofactor to stimulate the activity of 3D polymerase, maybe through a nucleid acid chaperone activity. In terms of biological role, localizes the viral replication complex to the surface of membranous vesicles. It inhibits host cell endoplasmic reticulum-to-Golgi apparatus transport and causes the disassembly of the Golgi complex, possibly through GBF1 interaction. This would result in depletion of MHC, trail receptors and IFN receptors at the host cell surface. Plays an essential role in viral RNA replication by recruiting ACBD3 and PI4KB at the viral replication sites, thereby allowing the formation of the rearranged membranous structures where viral replication takes place. Acts as a primer for viral RNA replication and remains covalently bound to viral genomic RNA. VPg is uridylylated prior to priming replication into VPg-pUpU. The oriI viral genomic sequence may act as a template for this. The VPg-pUpU is then used as primer on the genomic RNA poly(A) by the RNA-dependent RNA polymerase to replicate the viral genome. During genome replication, the VPg-RNA linkage is removed by the host TDP2, thereby accelerating replication. During the late stage of the replication cycle, host TDP2 is excluded from sites of viral RNA synthesis and encapsidation, allowing for the generation of progeny virions. Its function is as follows. Involved in the viral replication complex and viral polypeptide maturation. It exhibits protease activity with a specificity and catalytic efficiency that is different from protease 3C. Protein 3CD lacks polymerase activity. Protein 3CD binds to the 5'UTR of the viral genome. Functionally, major viral protease that mediates proteolytic processing of the polyprotein. Cleaves host EIF5B, contributing to host translation shutoff. Also cleaves host PABPC1, contributing to host translation shutoff. Cleaves and inhibits host RIGI, thereby inhibiting the type-I IFN production and the establishment of the antiviral state. Cleaves and inhibits host MAVS, thereby inhibiting the type-I IFN production and the establishment of the antiviral state. Cleaves and inhibits host TICAM1/TRIF, thereby inhibiting the type-I IFN production. Cleaves host NLRP1, triggers host N-glycine-mediated degradation of the autoinhibitory NLRP1 N-terminal fragment. In terms of biological role, replicates the viral genomic RNA on the surface of intracellular membranes. May form linear arrays of subunits that propagate along a strong head-to-tail interaction called interface-I. Covalently attaches UMP to a tyrosine of VPg, which is used to prime RNA synthesis. The positive stranded RNA genome is first replicated at virus induced membranous vesicles, creating a dsRNA genomic replication form. This dsRNA is then used as template to synthesize positive stranded RNA genomes. ss(+)RNA genomes are either translated, replicated or encapsidated. The chain is Genome polyprotein from Homo sapiens (Human).